Reading from the N-terminus, the 394-residue chain is Saposin-like protein 11 (394 aa).

The N-terminal stretch at 1 to 18 (MSVFRFLLFLSLLVGSNA) is a signal peptide. N-linked (GlcNAc...) asparagine glycans are attached at residues Asn25 and Asn272. A Saposin B-type domain is found at 306-394 (GNMVCDICEK…SFCKHVPFCK (89 aa)). 3 disulfide bridges follow: Cys310–Cys393, Cys313–Cys387, and Cys343–Cys359.

This Caenorhabditis elegans protein is Saposin-like protein 11 (spp-11).